A 296-amino-acid polypeptide reads, in one-letter code: 2-haloacid dehalogenase, configuration-inverting (296 aa).

Belongs to the HAD-like hydrolase superfamily. S-2-haloalkanoic acid dehalogenase family.

It carries out the reaction an (S)-2-haloacid + H2O = a (2R)-2-hydroxycarboxylate + a halide anion + H(+). The enzyme catalyses an (R)-2-haloacid + H2O = a (2S)-2-hydroxycarboxylate + a halide anion + H(+). Functionally, dehalogenates both (S)- and (R)-2-haloalkanoic acids to the corresponding (R)- and (S)-hydroxyalkanoic acids, respectively, with inversion of configuration at C-2. Acts on 2-haloalkanoic acids whose carbon chain lengths are five or less. In Alcaligenes xylosoxydans xylosoxydans (Achromobacter xylosoxidans), this protein is 2-haloacid dehalogenase, configuration-inverting (dhlC).